The following is a 388-amino-acid chain: Succinate--CoA ligase [ADP-forming] subunit beta (388 aa).

The ATP-grasp domain occupies 9–244 (KQLFARYGLP…QSQEDPREAQ (236 aa)). Residues lysine 46, 53–55 (GRG), glutamate 99, threonine 102, and glutamate 107 each bind ATP. Residues asparagine 199 and aspartate 213 each contribute to the Mg(2+) site. Substrate is bound by residues asparagine 264 and 321-323 (GIV).

Belongs to the succinate/malate CoA ligase beta subunit family. Heterotetramer of two alpha and two beta subunits. Mg(2+) is required as a cofactor.

It carries out the reaction succinate + ATP + CoA = succinyl-CoA + ADP + phosphate. The enzyme catalyses GTP + succinate + CoA = succinyl-CoA + GDP + phosphate. It participates in carbohydrate metabolism; tricarboxylic acid cycle; succinate from succinyl-CoA (ligase route): step 1/1. Functionally, succinyl-CoA synthetase functions in the citric acid cycle (TCA), coupling the hydrolysis of succinyl-CoA to the synthesis of either ATP or GTP and thus represents the only step of substrate-level phosphorylation in the TCA. The beta subunit provides nucleotide specificity of the enzyme and binds the substrate succinate, while the binding sites for coenzyme A and phosphate are found in the alpha subunit. This chain is Succinate--CoA ligase [ADP-forming] subunit beta, found in Escherichia coli O8 (strain IAI1).